We begin with the raw amino-acid sequence, 606 residues long: NADH-ubiquinone oxidoreductase chain 5 (606 aa).

16 helical membrane-spanning segments follow: residues Met1 to Met21, Ala43 to Ile63, Val87 to Tyr107, Pro112 to Val132, Leu137 to Trp157, Ala171 to Thr191, Leu213 to Leu233, Thr241 to Ile261, Val273 to Ile293, Ile301 to Gln321, Leu324 to Gly344, Met366 to Leu386, Trp407 to Phe429, Leu457 to Val477, Met482 to Leu502, and Gly582 to Phe602.

Belongs to the complex I subunit 5 family. In terms of assembly, core subunit of respiratory chain NADH dehydrogenase (Complex I) which is composed of 45 different subunits.

It is found in the mitochondrion inner membrane. It catalyses the reaction a ubiquinone + NADH + 5 H(+)(in) = a ubiquinol + NAD(+) + 4 H(+)(out). In terms of biological role, core subunit of the mitochondrial membrane respiratory chain NADH dehydrogenase (Complex I) which catalyzes electron transfer from NADH through the respiratory chain, using ubiquinone as an electron acceptor. Essential for the catalytic activity and assembly of complex I. In Sus scrofa (Pig), this protein is NADH-ubiquinone oxidoreductase chain 5 (MT-ND5).